The sequence spans 1227 residues: DNA-directed RNA polymerase subunit beta (1227 aa).

The protein belongs to the RNA polymerase beta chain family. The RNAP catalytic core consists of 2 alpha, 1 beta, 1 beta' and 1 omega subunit. When a sigma factor is associated with the core the holoenzyme is formed, which can initiate transcription.

It catalyses the reaction RNA(n) + a ribonucleoside 5'-triphosphate = RNA(n+1) + diphosphate. DNA-dependent RNA polymerase catalyzes the transcription of DNA into RNA using the four ribonucleoside triphosphates as substrates. The polypeptide is DNA-directed RNA polymerase subunit beta (Chloroflexus aggregans (strain MD-66 / DSM 9485)).